We begin with the raw amino-acid sequence, 569 residues long: GATOR1 complex protein NPRL3 (569 aa).

Disordered regions lie at residues 27–60 (PFQR…DQDG) and 441–476 (TPNA…SGDS). Polar residues-rich tracts occupy residues 34-52 (HPAS…NNTG) and 441-468 (TPNA…NSSA). Serine 476 is subject to Phosphoserine.

The protein belongs to the NPR3 family. In terms of assembly, within the GATOR complex, component of the GATOR1 subcomplex, made of DEPDC5, NPRL2 and NPRL3. GATOR1 mediates the strong interaction of the GATOR complex with small GTPases Rag (RagA/RRAGA, RagB/RRAGB, RagC/RRAGC and/or RagD/RRAGD) heterodimers. GATOR1 interacts with GPR155/LYCHOS; interaction takes place in presence of cholesterol and prevents interaction between GATOR1 and KICSTOR.

It localises to the lysosome membrane. Its function is as follows. As a component of the GATOR1 complex functions as an inhibitor of the amino acid-sensing branch of the mTORC1 pathway. In response to amino acid depletion, the GATOR1 complex has GTPase activating protein (GAP) activity and strongly increases GTP hydrolysis by RagA/RRAGA (or RagB/RRAGB) within heterodimeric Rag complexes, thereby turning them into their inactive GDP-bound form, releasing mTORC1 from lysosomal surface and inhibiting mTORC1 signaling. In the presence of abundant amino acids, the GATOR1 complex is negatively regulated by GATOR2, the other GATOR subcomplex, in this amino acid-sensing branch of the TORC1 pathway. In Mus musculus (Mouse), this protein is GATOR1 complex protein NPRL3.